A 355-amino-acid polypeptide reads, in one-letter code: MSGQGKRLMVMAGGTGGHVFPGLAVAHHLMAQGWQVRWLGTADRMEADLVPKHGIEIDFIRISGLRGKGIKALIAAPLRIFNAWRHARAIMKAYKPDVVLGMGGYVSGPGGLAAWSLGIPVVLHEQNGIAGLTNKWLAKIATKVMQAFPGAFPNAEVVGNPVRTDVLALPLPQQRLAGREGPVRVLVVGGSQGARILNQTMPQVAAKLGDSVTIWHQSGKGSQQSVEQAYAEAGQPQHKVTEFIDDMAAAYAWADVVVCRSGALTVSEIAAAGLPALFVPFQHKDRQQYWNALPLEKAGAAKIIEQPQLSVDAVANTLAGWSRETLLTMAERARAASIPDATERVANEVSRAARA.

Residues 15–17, asparagine 127, arginine 163, serine 191, isoleucine 244, 263–268, and glutamine 288 each bind UDP-N-acetyl-alpha-D-glucosamine; these read TGG and ALTVSE.

Belongs to the glycosyltransferase 28 family. MurG subfamily.

The protein resides in the cell inner membrane. It carries out the reaction di-trans,octa-cis-undecaprenyl diphospho-N-acetyl-alpha-D-muramoyl-L-alanyl-D-glutamyl-meso-2,6-diaminopimeloyl-D-alanyl-D-alanine + UDP-N-acetyl-alpha-D-glucosamine = di-trans,octa-cis-undecaprenyl diphospho-[N-acetyl-alpha-D-glucosaminyl-(1-&gt;4)]-N-acetyl-alpha-D-muramoyl-L-alanyl-D-glutamyl-meso-2,6-diaminopimeloyl-D-alanyl-D-alanine + UDP + H(+). It participates in cell wall biogenesis; peptidoglycan biosynthesis. Cell wall formation. Catalyzes the transfer of a GlcNAc subunit on undecaprenyl-pyrophosphoryl-MurNAc-pentapeptide (lipid intermediate I) to form undecaprenyl-pyrophosphoryl-MurNAc-(pentapeptide)GlcNAc (lipid intermediate II). The polypeptide is UDP-N-acetylglucosamine--N-acetylmuramyl-(pentapeptide) pyrophosphoryl-undecaprenol N-acetylglucosamine transferase (Escherichia coli (strain 55989 / EAEC)).